A 180-amino-acid polypeptide reads, in one-letter code: Centromere protein M (180 aa).

The protein resides in the nucleus. It is found in the chromosome. The protein localises to the centromere. Probable component of a centromeric complex involved in assembly of kinetochore proteins, mitotic progression and chromosome segregation. This chain is Centromere protein M (cenpm), found in Xenopus laevis (African clawed frog).